Consider the following 108-residue polypeptide: CRISPR-associated endoribonuclease Cas2 (108 aa).

Asp-15 is a binding site for Mg(2+).

Belongs to the CRISPR-associated endoribonuclease Cas2 protein family. Homodimer, forms a heterotetramer with a Cas1 homodimer. Mg(2+) is required as a cofactor.

Its function is as follows. CRISPR (clustered regularly interspaced short palindromic repeat), is an adaptive immune system that provides protection against mobile genetic elements (viruses, transposable elements and conjugative plasmids). CRISPR clusters contain sequences complementary to antecedent mobile elements and target invading nucleic acids. CRISPR clusters are transcribed and processed into CRISPR RNA (crRNA). Functions as a ssRNA-specific endoribonuclease. Involved in the integration of spacer DNA into the CRISPR cassette. The chain is CRISPR-associated endoribonuclease Cas2 from Paracidovorax avenae (strain ATCC 19860 / DSM 7227 / CCUG 15838 / JCM 20985 / LMG 2117 / NCPPB 1011) (Acidovorax avenae).